Here is a 465-residue protein sequence, read N- to C-terminus: Argininosuccinate lyase (465 aa).

It belongs to the lyase 1 family. Argininosuccinate lyase subfamily.

It localises to the cytoplasm. The catalysed reaction is 2-(N(omega)-L-arginino)succinate = fumarate + L-arginine. It functions in the pathway amino-acid biosynthesis; L-arginine biosynthesis; L-arginine from L-ornithine and carbamoyl phosphate: step 3/3. In Rhodopseudomonas palustris (strain ATCC BAA-98 / CGA009), this protein is Argininosuccinate lyase.